The following is a 246-amino-acid chain: Caffeoyl-CoA O-methyltransferase 1 (246 aa).

Lysine 21 is a binding site for substrate. Residues threonine 63, glutamate 85, 87 to 88, serine 93, aspartate 111, and alanine 140 each bind S-adenosyl-L-methionine; that span reads GV. Aspartate 162 contributes to the substrate binding site. Residue aspartate 162 participates in a divalent metal cation binding. Aspartate 164 contributes to the S-adenosyl-L-methionine binding site. Aspartate 188 and asparagine 189 together coordinate a divalent metal cation. Asparagine 193 provides a ligand contact to substrate.

Belongs to the class I-like SAM-binding methyltransferase superfamily. Cation-dependent O-methyltransferase family. CCoAMT subfamily. A divalent metal cation is required as a cofactor.

It catalyses the reaction (E)-caffeoyl-CoA + S-adenosyl-L-methionine = (E)-feruloyl-CoA + S-adenosyl-L-homocysteine + H(+). The protein operates within aromatic compound metabolism; phenylpropanoid biosynthesis. Its function is as follows. Methylates caffeoyl-CoA to feruloyl-CoA and 5-hydroxyferuloyl-CoA to sinapoyl-CoA. Plays a role in the synthesis of feruloylated polysaccharides. Involved in the reinforcement of the plant cell wall. Also involved in the responding to wounding or pathogen challenge by the increased formation of cell wall-bound ferulic acid polymers. The protein is Caffeoyl-CoA O-methyltransferase 1 (CCOMT) of Eucalyptus globulus (Tasmanian blue gum).